The sequence spans 268 residues: Tryptophan synthase alpha chain (268 aa).

Residues Glu49 and Asp60 each act as proton acceptor in the active site.

It belongs to the TrpA family. As to quaternary structure, tetramer of two alpha and two beta chains.

It carries out the reaction (1S,2R)-1-C-(indol-3-yl)glycerol 3-phosphate + L-serine = D-glyceraldehyde 3-phosphate + L-tryptophan + H2O. The protein operates within amino-acid biosynthesis; L-tryptophan biosynthesis; L-tryptophan from chorismate: step 5/5. Its function is as follows. The alpha subunit is responsible for the aldol cleavage of indoleglycerol phosphate to indole and glyceraldehyde 3-phosphate. This Salmonella choleraesuis (strain SC-B67) protein is Tryptophan synthase alpha chain.